The chain runs to 63 residues: Hyphancin-3G (63 aa).

The signal sequence occupies residues methionine 1 to alanine 22. Residues valine 23–proline 26 constitute a propeptide, removed by a dipeptidylpeptidase. Leucine 61 bears the Leucine amide mark.

Belongs to the cecropin family.

The protein localises to the secreted. In terms of biological role, has antibacterial activity. The polypeptide is Hyphancin-3G (Hyphantria cunea (Fall webworm moth)).